The primary structure comprises 89 residues: Small ribosomal subunit protein uS15 (89 aa).

The protein belongs to the universal ribosomal protein uS15 family. Part of the 30S ribosomal subunit. Forms a bridge to the 50S subunit in the 70S ribosome, contacting the 23S rRNA.

Its function is as follows. One of the primary rRNA binding proteins, it binds directly to 16S rRNA where it helps nucleate assembly of the platform of the 30S subunit by binding and bridging several RNA helices of the 16S rRNA. In terms of biological role, forms an intersubunit bridge (bridge B4) with the 23S rRNA of the 50S subunit in the ribosome. The sequence is that of Small ribosomal subunit protein uS15 from Corynebacterium aurimucosum (strain ATCC 700975 / DSM 44827 / CIP 107346 / CN-1) (Corynebacterium nigricans).